The primary structure comprises 701 residues: F-box/LRR-repeat protein 17 (701 aa).

3 disordered regions span residues 73-93 (SAGL…RDGA), 227-250 (GGGG…CQAP), and 279-321 (VRAG…IPDI). The span at 81–90 (PLSPPPPPPR) shows a compositional bias: pro residues. Over residues 227-236 (GGGGPAGGGA) the composition is skewed to gly residues. Residues 285-294 (APSSAQQQPE) show a composition bias toward polar residues. Residues 318 to 365 (IPDINQLPPSILLKIFSNLSLNERCLSASLVCKYWRDLCLDFQFWKQL) enclose the F-box domain.

The protein belongs to the FBXL17 family. As to quaternary structure, part of the SCF (SKP1-CUL1-F-box) E3 ubiquitin-protein ligase complex SCF(FBXL17) composed of CUL1, SKP1, RBX1 and FBXL17. Interacts with BTB domain-containing proteins such as KLHL12, BCL6 and BACH1; specifically recognizes and binds a conserved degron of non-consecutive residues present at the interface of BTB dimers of aberrant composition. Interacts with SUFU. Interacts with PRMT1.

The protein resides in the cytoplasm. The protein localises to the nucleus. Its function is as follows. Substrate-recognition component of the SCF(FBXL17) E3 ubiquitin ligase complex, a key component of a quality control pathway required to ensure functional dimerization of BTB domain-containing proteins (dimerization quality control, DQC). FBXL17 specifically recognizes and binds a conserved degron of non-consecutive residues present at the interface of BTB dimers of aberrant composition: aberrant BTB dimer are then ubiquitinated by the SCF(FBXL17) complex and degraded by the proteasome. The ability of the SCF(FBXL17) complex to eliminate compromised BTB dimers is required for the differentiation and survival of neural crest and neuronal cells. The SCF(FBXL17) complex mediates ubiquitination and degradation of BACH1. The SCF(FBXL17) complex is also involved in the regulation of the hedgehog/smoothened (Hh) signaling pathway by mediating the ubiquitination and degradation of SUFU, allowing the release of GLI1 from SUFU for proper Hh signal transduction. The SCF(FBXL17) complex mediates ubiquitination and degradation of PRMT1. The protein is F-box/LRR-repeat protein 17 of Mus musculus (Mouse).